The sequence spans 1199 residues: RNA-binding protein 20 (1199 aa).

Disordered regions lie at residues methionine 1–serine 55, proline 163–serine 186, and glutamate 320–glutamine 346. Over residues valine 25 to glutamine 42 the composition is skewed to low complexity. Positions proline 43 to proline 52 are enriched in pro residues. The span at serine 170 to serine 183 shows a compositional bias: low complexity. Residues histidine 410–phenylalanine 444 form a U1-type zinc finger. In terms of domain architecture, RRM spans arginine 520–arginine 595. A compositionally biased stretch (basic and acidic residues) spans glutamate 626–arginine 636. 3 disordered regions span residues glutamate 626–aspartate 685, arginine 720–asparagine 884, and glycine 944–cysteine 1077. Positions tyrosine 630 to serine 649 are RS. Phosphoserine is present on residues serine 637, serine 639, serine 642, serine 644, and serine 651. The segment covering arginine 638–serine 649 has biased composition (low complexity). The span at tyrosine 667–aspartate 685 shows a compositional bias: basic and acidic residues. Serine 728 bears the Phosphoserine mark. Basic and acidic residues-rich tracts occupy residues lysine 739 to proline 758, arginine 770 to glutamine 831, and glutamate 859 to aspartate 868. Serine 787 carries the phosphoserine modification. A phosphoserine mark is found at serine 871, serine 873, and serine 955. Over residues valine 962–asparagine 971 the composition is skewed to polar residues. Residues serine 991, serine 1026, serine 1038, serine 1049, serine 1054, serine 1058, serine 1070, serine 1088, and serine 1093 each carry the phosphoserine modification. The span at aspartate 1042 to histidine 1055 shows a compositional bias: basic and acidic residues. Over residues proline 1067–cysteine 1077 the composition is skewed to polar residues. The Matrin-type zinc finger occupies phenylalanine 1133–lysine 1164. The interval glutamate 1172–leucine 1199 is disordered. Phosphoserine occurs at positions 1182 and 1184.

As to quaternary structure, associates with components of the U1 and U2 U1 small nuclear ribonucleoprotein complexes. Phosphorylation regulates the subcellular localization. Phosphorylation of Ser-637 and Ser-639 in the RS (arginine/serine-rich) region promotes nuclear localization of the protein. In contrast, phosphorylation of the C-terminal disordered region promotes localization to cytoplasmic ribonucleoprotein granules. Predominantly expressed in striated muscle, with highest expression in the heart. In differentiating myoblasts, expression correlates with sarcomere assembly: expression peaks when alpha-actinin is localized mainly in mature Z bodies within the nascent myofiber and expression declines as the sarcomeres continue to mature. Also expressed in kidney.

Its subcellular location is the nucleus. It localises to the cytoplasm. It is found in the cytoplasmic ribonucleoprotein granule. Functionally, RNA-binding protein that acts as a regulator of mRNA splicing of a subset of genes encoding key structural proteins involved in cardiac development, such as TTN (Titin), CACNA1C, CAMK2D or PDLIM5/ENH. Acts as a repressor of mRNA splicing: specifically binds the 5'UCUU-3' motif that is predominantly found within intronic sequences of pre-mRNAs, leading to the exclusion of specific exons in target transcripts. RBM20-mediated exon skipping is hormone-dependent and is essential for TTN isoform transition in both cardiac and skeletal muscles. RBM20-mediated exon skipping of TTN provides substrates for the formation of circular RNA (circRNAs) from the TTN transcripts. Together with RBM24, promotes the expression of short isoforms of PDLIM5/ENH in cardiomyocytes. The protein is RNA-binding protein 20 of Mus musculus (Mouse).